A 137-amino-acid polypeptide reads, in one-letter code: Acidic phospholipase A2 Vur-PL3 (137 aa).

The signal sequence occupies residues 1 to 16; it reads MRTLWIVAVCLIGVEG. Cystine bridges form between Cys42-Cys131, Cys44-Cys60, Cys59-Cys111, Cys65-Cys137, Cys66-Cys104, Cys73-Cys97, and Cys91-Cys102. 3 residues coordinate Ca(2+): Tyr43, Gly45, and Gly47. His63 is an active-site residue. Asp64 contributes to the Ca(2+) binding site. The active site involves Asp105.

Ca(2+) is required as a cofactor. As to expression, expressed by the venom gland.

The protein resides in the secreted. The catalysed reaction is a 1,2-diacyl-sn-glycero-3-phosphocholine + H2O = a 1-acyl-sn-glycero-3-phosphocholine + a fatty acid + H(+). This is Acidic phospholipase A2 Vur-PL3 from Vipera renardi (Steppe viper).